Here is a 153-residue protein sequence, read N- to C-terminus: Lipoprotein signal peptidase (153 aa).

The next 3 membrane-spanning stretches (helical) occupy residues 11 to 31 (ILIL…SLFV), 39 to 59 (DCID…FAFL), and 68 to 88 (LVLV…CYAI). Catalysis depends on residues D112 and D129. A helical membrane pass occupies residues 122-142 (FAVFNFADVMIDVAVVWILLL).

It belongs to the peptidase A8 family.

The protein resides in the cell inner membrane. The enzyme catalyses Release of signal peptides from bacterial membrane prolipoproteins. Hydrolyzes -Xaa-Yaa-Zaa-|-(S,diacylglyceryl)Cys-, in which Xaa is hydrophobic (preferably Leu), and Yaa (Ala or Ser) and Zaa (Gly or Ala) have small, neutral side chains.. It functions in the pathway protein modification; lipoprotein biosynthesis (signal peptide cleavage). In terms of biological role, this protein specifically catalyzes the removal of signal peptides from prolipoproteins. This chain is Lipoprotein signal peptidase, found in Sulfurimonas denitrificans (strain ATCC 33889 / DSM 1251) (Thiomicrospira denitrificans (strain ATCC 33889 / DSM 1251)).